Consider the following 239-residue polypeptide: Small ribosomal subunit protein uS3c (239 aa).

Residues isoleucine 43–lysine 139 form the KH type-2 domain.

This sequence belongs to the universal ribosomal protein uS3 family. As to quaternary structure, part of the 30S ribosomal subunit.

Its subcellular location is the plastid. It is found in the chloroplast. This Oryza nivara (Indian wild rice) protein is Small ribosomal subunit protein uS3c (rps3).